We begin with the raw amino-acid sequence, 428 residues long: Elongation factor 1-alpha (428 aa).

The region spanning 5–217 (KPHVNIVFIG…DQIPEPEKPV (213 aa)) is the tr-type G domain. Residues 14-21 (GHVDHGKS) are G1. 14–21 (GHVDHGKS) serves as a coordination point for GTP. Mg(2+) is bound at residue Ser-21. The segment at 68–72 (GITID) is G2. The segment at 89 to 92 (DAPG) is G3. GTP contacts are provided by residues 89-93 (DAPGH) and 144-147 (NKMD). A G4 region spans residues 144–147 (NKMD). Residues 181–183 (SAW) are G5.

It belongs to the TRAFAC class translation factor GTPase superfamily. Classic translation factor GTPase family. EF-Tu/EF-1A subfamily.

It localises to the cytoplasm. The enzyme catalyses GTP + H2O = GDP + phosphate + H(+). Functionally, GTP hydrolase that promotes the GTP-dependent binding of aminoacyl-tRNA to the A-site of ribosomes during protein biosynthesis. In Pyrococcus furiosus (strain ATCC 43587 / DSM 3638 / JCM 8422 / Vc1), this protein is Elongation factor 1-alpha.